The chain runs to 243 residues: Sarcospan (243 aa).

Residues Met-1–Glu-43 are disordered. Over Met-1–Pro-53 the chain is Cytoplasmic. Positions Pro-7–Pro-24 are enriched in low complexity. Residues Leu-54–Met-74 traverse the membrane as a helical segment. At Ala-75–Thr-86 the chain is on the extracellular side. Residues Pro-87 to Val-107 form a helical membrane-spanning segment. Residues Ser-108–Lys-122 are Cytoplasmic-facing. Residues Leu-123–Ala-143 form a helical membrane-spanning segment. Over Ala-144–Leu-193 the chain is Extracellular. The chain crosses the membrane as a helical span at residues Phe-194 to Phe-214. Over Val-215–Ile-243 the chain is Cytoplasmic.

As to expression, isoform 1 is expressed exclusively in heart and skeletal muscle. Isoform 2 is expressed in heart, skeletal muscle, thymus, prostate, testis, ovary, small intestine, colon and spleen.

It is found in the cell membrane. The protein resides in the sarcolemma. The protein localises to the postsynaptic cell membrane. Component of the dystrophin-glycoprotein complex (DGC), a complex that spans the muscle plasma membrane and forms a link between the F-actin cytoskeleton and the extracellular matrix. Preferentially associates with the sarcoglycan subcomplex of the DGC. The polypeptide is Sarcospan (SSPN) (Homo sapiens (Human)).